We begin with the raw amino-acid sequence, 470 residues long: Na(+)-translocating NADH-quinone reductase subunit A (470 aa).

The protein belongs to the NqrA family. In terms of assembly, composed of six subunits; NqrA, NqrB, NqrC, NqrD, NqrE and NqrF.

The catalysed reaction is a ubiquinone + n Na(+)(in) + NADH + H(+) = a ubiquinol + n Na(+)(out) + NAD(+). Its function is as follows. NQR complex catalyzes the reduction of ubiquinone-1 to ubiquinol by two successive reactions, coupled with the transport of Na(+) ions from the cytoplasm to the periplasm. NqrA to NqrE are probably involved in the second step, the conversion of ubisemiquinone to ubiquinol. In Chlamydia caviae (strain ATCC VR-813 / DSM 19441 / 03DC25 / GPIC) (Chlamydophila caviae), this protein is Na(+)-translocating NADH-quinone reductase subunit A.